Consider the following 139-residue polypeptide: Putative nickel-responsive regulator (139 aa).

His-79, His-90, His-92, and Cys-98 together coordinate Ni(2+).

Belongs to the transcriptional regulatory CopG/NikR family. Ni(2+) is required as a cofactor.

Functionally, transcriptional regulator. The protein is Putative nickel-responsive regulator of Geobacter sp. (strain M21).